Reading from the N-terminus, the 36-residue chain is Photosystem I reaction center subunit VIII (36 aa).

Residues 1-21 (MITFSFPSIFVPLVGLVFPAI) traverse the membrane as a helical segment.

The protein belongs to the PsaI family.

It is found in the plastid. The protein resides in the chloroplast thylakoid membrane. In terms of biological role, may help in the organization of the PsaL subunit. In Coffea arabica (Arabian coffee), this protein is Photosystem I reaction center subunit VIII.